The following is a 221-amino-acid chain: Membrane-bound lytic murein transglycosylase E (221 aa).

This sequence belongs to the transglycosylase Slt family.

It catalyses the reaction Exolytic cleavage of the (1-&gt;4)-beta-glycosidic linkage between N-acetylmuramic acid (MurNAc) and N-acetylglucosamine (GlcNAc) residues in peptidoglycan, from either the reducing or the non-reducing ends of the peptidoglycan chains, with concomitant formation of a 1,6-anhydrobond in the MurNAc residue.. Functionally, murein-degrading enzyme. May play a role in recycling of muropeptides during cell elongation and/or cell division. The polypeptide is Membrane-bound lytic murein transglycosylase E (mltE) (Buchnera aphidicola subsp. Acyrthosiphon pisum (strain APS) (Acyrthosiphon pisum symbiotic bacterium)).